The sequence spans 452 residues: Phosphoglucosamine mutase (452 aa).

Ser-103 acts as the Phosphoserine intermediate in catalysis. The Mg(2+) site is built by Ser-103, Asp-244, Asp-246, and Asp-248. Ser-103 bears the Phosphoserine mark.

It belongs to the phosphohexose mutase family. Mg(2+) serves as cofactor. Activated by phosphorylation.

The catalysed reaction is alpha-D-glucosamine 1-phosphate = D-glucosamine 6-phosphate. In terms of biological role, catalyzes the conversion of glucosamine-6-phosphate to glucosamine-1-phosphate. In Rhodospirillum rubrum (strain ATCC 11170 / ATH 1.1.1 / DSM 467 / LMG 4362 / NCIMB 8255 / S1), this protein is Phosphoglucosamine mutase.